The following is a 597-amino-acid chain: Glypican-3 (597 aa).

An N-terminal signal peptide occupies residues 1–24 (MAGTVRTACLLVAMLLGLGCLGQA). Glutamine 25 is subject to Pyrrolidone carboxylic acid. 7 cysteine pairs are disulfide-bonded: cysteine 34/cysteine 71, cysteine 64/cysteine 261, cysteine 72/cysteine 264, cysteine 196/cysteine 348, cysteine 251/cysteine 284, cysteine 273/cysteine 421, and cysteine 277/cysteine 409. Asparagine 123 and asparagine 240 each carry an N-linked (GlcNAc...) asparagine glycan. The residue at position 351 (serine 351) is a Phosphoserine. Residue asparagine 417 is glycosylated (N-linked (GlcNAc...) asparagine). O-linked (Xyl...) (glycosaminoglycan) serine glycosylation is found at serine 494 and serine 508. The tract at residues 533–553 (DAPGNKQHGNQKDNEITTSHS) is disordered.

This sequence belongs to the glypican family. As to quaternary structure, heterodimer; disulfide-linked. Cleavage by a furin-like convertase results in production of alpha and beta chains which form a disulfide-linked heterodimer. Interacts with DPP4. Interacts with FGF2. Interacts with WNT5A. Also interacts with WNT3A and WNT7B. Interacts with hedgehog protein SHH; the heparan sulfate chains are not required for the interaction. Also interacts with hedgehog protein IHH. Interacts with CD81. Interacts with Wnt receptors FZD4, FZD7 and FZD8; the heparan sulfate chains are required for the interaction. Post-translationally, O-glycosylated; contains heparan sulfate and/or chondroitin sulfate. In terms of processing, cleaved intracellularly by a furin-like convertase to generate 2 subunits, alpha and beta, which remain associated through disulfide bonds and are associated with the cell surface via the GPI-anchor. This processing is essential for its role in inhibition of hedgehog signaling. A second proteolytic event may result in cleavage of the protein on the cell surface, separating it from the GPI-anchor and leading to its shedding from the cell surface.

The protein localises to the cell membrane. Its function is as follows. Cell surface proteoglycan. Negatively regulates the hedgehog signaling pathway when attached via the GPI-anchor to the cell surface by competing with the hedgehog receptor PTC1 for binding to hedgehog proteins. Binding to the hedgehog protein SHH triggers internalization of the complex by endocytosis and its subsequent lysosomal degradation. Positively regulates the canonical Wnt signaling pathway by binding to the Wnt receptor Frizzled and stimulating the binding of the Frizzled receptor to Wnt ligands. Positively regulates the non-canonical Wnt signaling pathway. Binds to CD81 which decreases the availability of free CD81 for binding to the transcriptional repressor HHEX, resulting in nuclear translocation of HHEX and transcriptional repression. Inhibits the dipeptidyl peptidase activity of DPP4. Plays a role in limb patterning and skeletal development by controlling the cellular response to BMP4. Modulates the effects of growth factors BMP2, BMP7 and FGF7 on renal branching morphogenesis. Required for coronary vascular development. Plays a role in regulating cell movements during gastrulation. In Rattus norvegicus (Rat), this protein is Glypican-3 (Gpc3).